Reading from the N-terminus, the 535-residue chain is Peptide chain release factor 3 (535 aa).

The region spanning 8-278 (ARRRTFAIIS…VDQAPAPGPR (271 aa)) is the tr-type G domain. GTP-binding positions include 17–24 (SHPDAGKT), 85–89 (DTPGH), and 139–142 (NKLD).

Belongs to the TRAFAC class translation factor GTPase superfamily. Classic translation factor GTPase family. PrfC subfamily.

The protein localises to the cytoplasm. Functionally, increases the formation of ribosomal termination complexes and stimulates activities of RF-1 and RF-2. It binds guanine nucleotides and has strong preference for UGA stop codons. It may interact directly with the ribosome. The stimulation of RF-1 and RF-2 is significantly reduced by GTP and GDP, but not by GMP. The protein is Peptide chain release factor 3 of Bordetella parapertussis (strain 12822 / ATCC BAA-587 / NCTC 13253).